The sequence spans 103 residues: Large ribosomal subunit protein uL24 (103 aa).

The segment at 70 to 103 is disordered; sequence YLDPSTNEPTRLGVRREDGKRVRYAKKSGKDLEN.

The protein belongs to the universal ribosomal protein uL24 family. Part of the 50S ribosomal subunit.

In terms of biological role, one of two assembly initiator proteins, it binds directly to the 5'-end of the 23S rRNA, where it nucleates assembly of the 50S subunit. Its function is as follows. One of the proteins that surrounds the polypeptide exit tunnel on the outside of the subunit. The sequence is that of Large ribosomal subunit protein uL24 from Lactiplantibacillus plantarum (strain ATCC BAA-793 / NCIMB 8826 / WCFS1) (Lactobacillus plantarum).